Here is a 1208-residue protein sequence, read N- to C-terminus: ATP-dependent DNA helicase Q4 (1208 aa).

Disordered stretches follow at residues 17–180 (AFRR…ASLS) and 201–333 (FLGA…AGKA). At Ser-27 the chain carries Phosphoserine. Positions 36–47 (EETRALYREYRT) are enriched in basic and acidic residues. Low complexity predominate over residues 61-70 (SSESLPAAAE). The span at 86-100 (ATKSPQSTPGRSRQG) shows a compositional bias: polar residues. Phosphoserine is present on residues Ser-178 and Ser-180. The span at 273 to 283 (AQVQQESSQAG) shows a compositional bias: polar residues. The region spanning 489-662 (VMRILSGIST…AQHLAVAEEP (174 aa)) is the Helicase ATP-binding domain. 502-509 (LPTGAGKS) is a binding site for ATP. Residues 605 to 608 (DEAH) carry the DEAH box motif. The region spanning 683–850 (DTDQALLTLL…AVKRLVQRVF (168 aa)) is the Helicase C-terminal domain. Zn(2+)-binding residues include Cys-853 and Cys-855. The interval 860-888 (PPSEQEGAVGGERPVPKYPPQEAEQLSHQ) is disordered. Residues Cys-897 and His-900 each coordinate Zn(2+). The tract at residues 1111-1130 (EEGQEPGGMEDAQGPEPGQA) is disordered. An increases helicase activity about 5-fold (in a fragment starting at residue 427) region spans residues 1117–1208 (GGMEDAQGPE…ATEELLQVAR (92 aa)).

This sequence belongs to the helicase family. RecQ subfamily. In terms of assembly, interacts with UBR1 and UBR2. Interacts with MCM10; this interaction regulates RECQL4 unwinding activity. Interacts (via residues 1-54) with TOPBP1. Requires Zn(2+) as cofactor. Ubiquitously expressed, with highest levels in thymus and testis.

The protein localises to the cytoplasm. The protein resides in the nucleus. It carries out the reaction Couples ATP hydrolysis with the unwinding of duplex DNA by translocating in the 3'-5' direction.. The enzyme catalyses ATP + H2O = ADP + phosphate + H(+). Functionally, an ATP-dependent DNA helicase which unwinds dsDNA with a 3'-overhang in a 3'-5' direction. Does not unwind more than 18 bp of dsDNA. May modulate chromosome segregation. The N-terminal domain (residues 1-54) binds DNA Y-shaped DNA better than ss- or dsDNA. The core helicase domain binds ssDNA. In Homo sapiens (Human), this protein is ATP-dependent DNA helicase Q4 (RECQL4).